The following is a 238-amino-acid chain: Purine nucleoside phosphorylase DeoD-type (238 aa).

An a purine D-ribonucleoside-binding site is contributed by His4. Phosphate-binding positions include Gly20, Arg24, Arg43, and 87–90; that span reads RVGS. A purine D-ribonucleoside-binding positions include 179-181 and 203-204; these read EME and SD. Asp204 acts as the Proton donor in catalysis.

This sequence belongs to the PNP/UDP phosphorylase family. Homohexamer; trimer of homodimers.

The enzyme catalyses a purine D-ribonucleoside + phosphate = a purine nucleobase + alpha-D-ribose 1-phosphate. The catalysed reaction is a purine 2'-deoxy-D-ribonucleoside + phosphate = a purine nucleobase + 2-deoxy-alpha-D-ribose 1-phosphate. Functionally, catalyzes the reversible phosphorolytic breakdown of the N-glycosidic bond in the beta-(deoxy)ribonucleoside molecules, with the formation of the corresponding free purine bases and pentose-1-phosphate. The sequence is that of Purine nucleoside phosphorylase DeoD-type from Pasteurella multocida (strain Pm70).